A 726-amino-acid polypeptide reads, in one-letter code: Long-chain-fatty-acid--CoA ligase ACSBG1 (726 aa).

The segment at 1–39 (MPDSRAAPQESLLDASLGTTQENVGTSSLTDGQTLSKEP) is disordered. Over residues 17–36 (LGTTQENVGTSSLTDGQTLS) the composition is skewed to polar residues. Ser36 carries the phosphoserine modification. Tyr641 carries the post-translational modification Phosphotyrosine. Residues 707–726 (SKQGSSLPGFSLRWQTGASS) form a disordered region.

This sequence belongs to the ATP-dependent AMP-binding enzyme family. Bubblegum subfamily.

The protein resides in the cytoplasm. It localises to the cytoplasmic vesicle. The protein localises to the microsome. It is found in the endoplasmic reticulum. Its subcellular location is the cell membrane. It catalyses the reaction a long-chain fatty acid + ATP + CoA = a long-chain fatty acyl-CoA + AMP + diphosphate. The catalysed reaction is (E)-hexadec-2-enoate + ATP + CoA = (2E)-hexadecenoyl-CoA + AMP + diphosphate. It carries out the reaction hexadecanoate + ATP + CoA = hexadecanoyl-CoA + AMP + diphosphate. Catalyzes the conversion of fatty acids such as long-chain and very long-chain fatty acids to their active form acyl-CoAs for both synthesis of cellular lipids, and degradation via beta-oxidation. Can activate diverse saturated, monosaturated and polyunsaturated fatty acids. This Bos taurus (Bovine) protein is Long-chain-fatty-acid--CoA ligase ACSBG1.